The chain runs to 323 residues: Small ribosomal subunit protein uS9m (323 aa).

Positions 298–323 are disordered; sequence TRDARKVERKKPGKVKARKSPTWVKR. The span at 304-323 shows a compositional bias: basic residues; that stretch reads VERKKPGKVKARKSPTWVKR.

This sequence belongs to the universal ribosomal protein uS9 family.

Its subcellular location is the mitochondrion. This Debaryomyces hansenii (strain ATCC 36239 / CBS 767 / BCRC 21394 / JCM 1990 / NBRC 0083 / IGC 2968) (Yeast) protein is Small ribosomal subunit protein uS9m (MRPS9).